The sequence spans 419 residues: MAALAGLGVLGAGRHLWKLPVRLSAGLQGCGPRRGYIAGSAERSPTFGLLFDIDGVLVRGHRVIPAALEAFSKLVNSQGQLRVPVVFVTNAGNILQHNKAQELSDLLRCKVDPDQVILSHSPMKLFLQYHSKQMLVSGQGPLVENARALGFQNVVTIDELRLAFPELDMVDLQRRPKTMRLRSDFPAIEGVLLLGEPVRWETNLQLIMDVLLSNGHPGTGLATAPYPHLPVLASNMDLLWMAEAKMPRFGHGTFLLCLETIYRKITGNELKYEGLMGKPSILTYQYAEDVIRQQAERRGWAAPIRKLYAIGDNPMSDVYGANLFHQYLQMANRGEEEQQTGGQQKQRPSATQSCASILVCTGIYSSQDPGSQVPPPGRRELPFHGHRDFSFSPGLLEASHIVHDVNEAVQLVFHQEGWA.

An N-terminal signal peptide occupies residues 1 to 15; that stretch reads MAALAGLGVLGAGRH.

It belongs to the HAD-like hydrolase superfamily.

The polypeptide is Haloacid dehalogenase-like hydrolase domain-containing 5 (Mus musculus (Mouse)).